Reading from the N-terminus, the 361-residue chain is Peptide chain release factor 1 (361 aa).

At Gln237 the chain carries N5-methylglutamine. The span at 287–297 shows a compositional bias: basic and acidic residues; it reads KQQKEQSDTRK. Residues 287–307 are disordered; it reads KQQKEQSDTRKNLVGSGDRSE.

Belongs to the prokaryotic/mitochondrial release factor family. Methylated by PrmC. Methylation increases the termination efficiency of RF1.

Its subcellular location is the cytoplasm. Peptide chain release factor 1 directs the termination of translation in response to the peptide chain termination codons UAG and UAA. This chain is Peptide chain release factor 1, found in Francisella philomiragia subsp. philomiragia (strain ATCC 25017 / CCUG 19701 / FSC 153 / O#319-036).